A 269-amino-acid polypeptide reads, in one-letter code: JmjC domain-containing protein 8 (269 aa).

A signal peptide spans 1 to 24 (MAAAGRRGLLLLFVLWMMVTVILP). N-linked (GlcNAc...) asparagine glycans are attached at residues N135, N145, and N214. The 134-residue stretch at 136 to 269 (DTLYFFGDNN…TSVFISTFLG (134 aa)) folds into the JmjC domain.

In terms of assembly, oligomer. Dimer. Interacts with PKM; regulates angiogenesis and metabolism. In terms of processing, N-glycosylated.

The protein resides in the endoplasmic reticulum lumen. The protein localises to the cytoplasm. Its function is as follows. Functions as a positive regulator of TNF-induced NF-kappaB signaling. Regulates angiogenesis and cellular metabolism through interaction with PKM. The protein is JmjC domain-containing protein 8 of Mus musculus (Mouse).